A 261-amino-acid chain; its full sequence is 3-hydroxyacyl-CoA dehydrogenase type-2 (261 aa).

Position 2 is an N-acetylalanine (Ala-2). NAD(+) is bound by residues Ser-20 and Asp-41. Residue Lys-53 is modified to N6-acetyllysine; alternate. Residue Lys-53 is modified to N6-succinyllysine; alternate. NAD(+) is bound at residue Val-65. N6-acetyllysine is present on Lys-69. Cys-91 contacts NAD(+). Residues Lys-99 and Lys-105 each carry the N6-acetyllysine modification. Lys-107 carries the N6-acetyllysine; alternate modification. At Lys-107 the chain carries N6-succinyllysine; alternate. Ser-155 contacts substrate. NAD(+)-binding residues include Tyr-168, Lys-172, Phe-201, and Thr-203. The Proton acceptor role is filled by Tyr-168. An N6-acetyllysine; alternate modification is found at Lys-212. Lys-212 carries the N6-succinyllysine; alternate modification.

The protein belongs to the short-chain dehydrogenases/reductases (SDR) family. In terms of assembly, homotetramer. Component of mitochondrial ribonuclease P, a complex composed of TRMT10C/MRPP1, HSD17B10/MRPP2 and PRORP/MRPP3. Interacts with TRMT10C/MRPP1; forming the MRPP1-MRPP2 subcomplex of the mitochondrial ribonuclease P complex.

Its subcellular location is the mitochondrion. The protein resides in the mitochondrion matrix. It localises to the mitochondrion nucleoid. It carries out the reaction a (3S)-3-hydroxyacyl-CoA + NAD(+) = a 3-oxoacyl-CoA + NADH + H(+). It catalyses the reaction (2S,3S)-3-hydroxy-2-methylbutanoyl-CoA + NAD(+) = 2-methyl-3-oxobutanoyl-CoA + NADH + H(+). The enzyme catalyses testosterone + NAD(+) = androst-4-ene-3,17-dione + NADH + H(+). The catalysed reaction is 5alpha-androstane-3alpha,17beta-diol + NAD(+) = 17beta-hydroxy-5alpha-androstan-3-one + NADH + H(+). It carries out the reaction 17beta-estradiol + NAD(+) = estrone + NADH + H(+). It catalyses the reaction cholate + NAD(+) = 3alpha,12alpha-dihydroxy-7-oxo-5beta-cholanate + NADH + H(+). The enzyme catalyses (3S)-3-hydroxybutanoyl-CoA + NAD(+) = acetoacetyl-CoA + NADH + H(+). The catalysed reaction is (3S)-hydroxyoctanoyl-CoA + NAD(+) = 3-oxooctanoyl-CoA + NADH + H(+). It carries out the reaction (3S)-hydroxyhexadecanoyl-CoA + NAD(+) = 3-oxohexadecanoyl-CoA + NADH + H(+). It catalyses the reaction 17beta-hydroxy-5alpha-androstan-3-one + NAD(+) = 5alpha-androstan-3,17-dione + NADH + H(+). The enzyme catalyses 5alpha-pregnan-20beta-ol-3-one + NAD(+) = 5alpha-pregnane-3,20-dione + NADH + H(+). The catalysed reaction is 3alpha-hydroxy-5alpha-pregnan-20-one + NAD(+) = 5alpha-pregnane-3,20-dione + NADH + H(+). It carries out the reaction cortisone + NAD(+) = 17alpha-hydroxypregn-4-en-3,11,20-trione-21-al + NADH + H(+). It catalyses the reaction 11-dehydrocorticosterone + NAD(+) = pregn-4-ene-3,11,20,21-tetraone + NADH + H(+). The enzyme catalyses cortisol + NAD(+) = 11beta,17alpha-dihydroxypregn-4-ene-3,20,21-trione + NADH + H(+). The catalysed reaction is chenodeoxycholate + NAD(+) = 7-oxolithocholate + NADH + H(+). It carries out the reaction ursodeoxycholate + NAD(+) = 7-oxolithocholate + NADH + H(+). It catalyses the reaction 3beta,7beta-dihydroxy-5beta-cholan-24-oate + NAD(+) = 3beta-hydroxy-7-oxo-5beta-cholan-24-oate + NADH + H(+). The protein operates within amino-acid degradation; L-isoleucine degradation. Its pathway is lipid metabolism; fatty acid beta-oxidation. It functions in the pathway steroid metabolism. It participates in lipid metabolism; bile acid biosynthesis. Mitochondrial dehydrogenase involved in pathways of fatty acid, branched-chain amino acid and steroid metabolism. Acts as (S)-3-hydroxyacyl-CoA dehydrogenase in mitochondrial fatty acid beta-oxidation, a major degradation pathway of fatty acids. Catalyzes the third step in the beta-oxidation cycle, namely the reversible conversion of (S)-3-hydroxyacyl-CoA to 3-ketoacyl-CoA. Preferentially accepts straight medium- and short-chain acyl-CoA substrates with highest efficiency for (3S)-hydroxybutanoyl-CoA. Acts as 3-hydroxy-2-methylbutyryl-CoA dehydrogenase in branched-chain amino acid catabolic pathway. Catalyzes the oxidation of 3-hydroxy-2-methylbutanoyl-CoA into 2-methyl-3-oxobutanoyl-CoA, a step in isoleucine degradation pathway. Has hydroxysteroid dehydrogenase activity toward steroid hormones and bile acids. Catalyzes the oxidation of 3alpha-, 17beta-, 20beta- and 21-hydroxysteroids and 7alpha- and 7beta-hydroxy bile acids. Oxidizes allopregnanolone/brexanolone at the 3alpha-hydroxyl group, which is known to be critical for the activation of gamma-aminobutyric acid receptors (GABAARs) chloride channel. Has phospholipase C-like activity toward cardiolipin and its oxidized species. Likely oxidizes the 2'-hydroxyl in the head group of cardiolipin to form a ketone intermediate that undergoes nucleophilic attack by water and fragments into diacylglycerol, dihydroxyacetone and orthophosphate. Has higher affinity for cardiolipin with oxidized fatty acids and may degrade these species during the oxidative stress response to protect cells from apoptosis. By interacting with intracellular amyloid-beta, it may contribute to the neuronal dysfunction associated with Alzheimer disease (AD). Essential for structural and functional integrity of mitochondria. In terms of biological role, in addition to mitochondrial dehydrogenase activity, moonlights as a component of mitochondrial ribonuclease P, a complex that cleaves tRNA molecules in their 5'-ends. Together with TRMT10C/MRPP1, forms a subcomplex of the mitochondrial ribonuclease P, named MRPP1-MRPP2 subcomplex, which displays functions that are independent of the ribonuclease P activity. The MRPP1-MRPP2 subcomplex catalyzes the formation of N(1)-methylguanine and N(1)-methyladenine at position 9 (m1G9 and m1A9, respectively) in tRNAs; HSD17B10/MRPP2 acting as a non-catalytic subunit. The MRPP1-MRPP2 subcomplex also acts as a tRNA maturation platform: following 5'-end cleavage by the mitochondrial ribonuclease P complex, the MRPP1-MRPP2 subcomplex enhances the efficiency of 3'-processing catalyzed by ELAC2, retains the tRNA product after ELAC2 processing and presents the nascent tRNA to the mitochondrial CCA tRNA nucleotidyltransferase TRNT1 enzyme. Associates with mitochondrial DNA complexes at the nucleoids to initiate RNA processing and ribosome assembly. The sequence is that of 3-hydroxyacyl-CoA dehydrogenase type-2 (Hsd17b10) from Mus musculus (Mouse).